Reading from the N-terminus, the 382-residue chain is Mannitol-1-phosphate 5-dehydrogenase (382 aa).

An NAD(+)-binding site is contributed by 3-14 (ALHFGAGNIGRG).

This sequence belongs to the mannitol dehydrogenase family.

The catalysed reaction is D-mannitol 1-phosphate + NAD(+) = beta-D-fructose 6-phosphate + NADH + H(+). The sequence is that of Mannitol-1-phosphate 5-dehydrogenase from Salmonella typhi.